Reading from the N-terminus, the 158-residue chain is Ribosome maturation factor RimP (158 aa).

It belongs to the RimP family.

The protein localises to the cytoplasm. Required for maturation of 30S ribosomal subunits. This Leuconostoc mesenteroides subsp. mesenteroides (strain ATCC 8293 / DSM 20343 / BCRC 11652 / CCM 1803 / JCM 6124 / NCDO 523 / NBRC 100496 / NCIMB 8023 / NCTC 12954 / NRRL B-1118 / 37Y) protein is Ribosome maturation factor RimP.